Here is a 781-residue protein sequence, read N- to C-terminus: Cadherin-24 (781 aa).

A signal peptide spans 1 to 22; it reads MWGLVRLLLAWLGGWGCMGRLA. A propeptide spanning residues 23 to 44 is cleaved from the precursor; sequence APVPAWAGSRGHSGPTLLRTRR. Over 45 to 603 the chain is Extracellular; sequence SWVWNQFFVI…LSPTGLSTGA (559 aa). Cadherin domains follow at residues 46–150, 151–259, 260–374, 375–479, and 479–592; these read WVWN…PPVF, PLGP…PPKF, PQSL…PPAF, TQAT…APQL, and LAEP…WPEA. N-linked (GlcNAc...) asparagine glycosylation is found at Asn446, Asn510, and Asn525. Residues 604-624 form a helical membrane-spanning segment; sequence LLAIVTCMGTLLALVVLFVAL. Residues 625–781 are Cytoplasmic-facing; the sequence is RRQKQEALMV…LYGAKEPPAP (157 aa). 2 disordered regions span residues 665–700 and 731–762; these read LQNPDGAAPPAAGPPVRRDVLPRTRAPRQPRPPGPA and EGRGSSCGSLSSLGSGSEAGGVPGPAEPLDDW. Residues 733-746 are compositionally biased toward low complexity; it reads RGSSCGSLSSLGSG.

In terms of assembly, associates with alpha-, beta- and delta-catenins.

It is found in the cell membrane. Cadherins are calcium-dependent cell adhesion proteins. They preferentially interact with themselves in a homophilic manner in connecting cells; cadherins may thus contribute to the sorting of heterogeneous cell types. Cadherin-24 mediate strong cell-cell adhesion. This Mus musculus (Mouse) protein is Cadherin-24 (Cdh24).